The primary structure comprises 356 residues: tRNA N6-adenosine threonylcarbamoyltransferase (356 aa).

Fe cation-binding residues include His-115 and His-119. Residues 137 to 141, Asp-170, Gly-183, and Asn-280 contribute to the substrate site; that span reads LVSGG. Position 308 (Asp-308) interacts with Fe cation.

Belongs to the KAE1 / TsaD family. Fe(2+) is required as a cofactor.

Its subcellular location is the cytoplasm. The catalysed reaction is L-threonylcarbamoyladenylate + adenosine(37) in tRNA = N(6)-L-threonylcarbamoyladenosine(37) in tRNA + AMP + H(+). Functionally, required for the formation of a threonylcarbamoyl group on adenosine at position 37 (t(6)A37) in tRNAs that read codons beginning with adenine. Is involved in the transfer of the threonylcarbamoyl moiety of threonylcarbamoyl-AMP (TC-AMP) to the N6 group of A37, together with TsaE and TsaB. TsaD likely plays a direct catalytic role in this reaction. The polypeptide is tRNA N6-adenosine threonylcarbamoyltransferase (Paracoccus denitrificans (strain Pd 1222)).